A 304-amino-acid polypeptide reads, in one-letter code: Glutamyl-Q tRNA(Asp) synthetase (304 aa).

L-glutamate contacts are provided by residues 14 to 18 (RFAPS) and Glu-50. A 'HIGH' region motif is present at residues 17–27 (PSPSGPLHFGS). Cys-106, Cys-108, Tyr-120, and Cys-124 together coordinate Zn(2+). The L-glutamate site is built by Tyr-178 and Arg-196. A 'KMSKS' region motif is present at residues 234 to 238 (KLSKQ). Lys-237 serves as a coordination point for ATP.

This sequence belongs to the class-I aminoacyl-tRNA synthetase family. GluQ subfamily. The cofactor is Zn(2+).

Its function is as follows. Catalyzes the tRNA-independent activation of glutamate in presence of ATP and the subsequent transfer of glutamate onto a tRNA(Asp). Glutamate is transferred on the 2-amino-5-(4,5-dihydroxy-2-cyclopenten-1-yl) moiety of the queuosine in the wobble position of the QUC anticodon. In Vibrio cholerae serotype O1 (strain ATCC 39315 / El Tor Inaba N16961), this protein is Glutamyl-Q tRNA(Asp) synthetase.